The sequence spans 717 residues: Ubiquitin carboxyl-terminal hydrolase 11 (717 aa).

The tract at residues 231-268 (ATAPPVHSLEVSSQIRDSSQDSSSSLSKVEKPKEEEGK) is disordered. Residues 242-257 (SSQIRDSSQDSSSSLS) are compositionally biased toward low complexity. Residues 258 to 268 (KVEKPKEEEGK) show a composition bias toward basic and acidic residues. In terms of domain architecture, USP spans 298 to 707 (TGLQNPCNTC…EVYVLFYERM (410 aa)). The Nucleophile role is filled by C307. The segment at 531–577 (KKEEITSQKKKSTIFGFHSRSRSKSPHHHHHHHHSSDDSTKNAKKRN) is disordered. Positions 549-564 (SRSRSKSPHHHHHHHH) are enriched in basic residues. The Proton acceptor role is filled by H649.

The protein belongs to the peptidase C19 family.

The catalysed reaction is Thiol-dependent hydrolysis of ester, thioester, amide, peptide and isopeptide bonds formed by the C-terminal Gly of ubiquitin (a 76-residue protein attached to proteins as an intracellular targeting signal).. This chain is Ubiquitin carboxyl-terminal hydrolase 11 (UBP11), found in Saccharomyces cerevisiae (strain ATCC 204508 / S288c) (Baker's yeast).